We begin with the raw amino-acid sequence, 741 residues long: Phage T7 exclusion protein (741 aa).

Residues 27–334 (FGNIAENISR…NSLIFLYPGM (308 aa)) form the KAP NTPase domain.

Responsible for the exclusion of phage T7 by plasmid F. Growth of bacteriophage T7 is inhibited in cells of E.coli that carries the plasmid F. The protein is Phage T7 exclusion protein (pifA) of Escherichia coli (strain K12).